The primary structure comprises 66 residues: DNA gyrase inhibitor YacG (66 aa).

Zn(2+)-binding residues include cysteine 9, cysteine 12, cysteine 28, and cysteine 32. The interval 45 to 66 (HKIAGSEESEDELYSGDLEPRH) is disordered.

This sequence belongs to the DNA gyrase inhibitor YacG family. As to quaternary structure, interacts with GyrB. Requires Zn(2+) as cofactor.

Its function is as follows. Inhibits all the catalytic activities of DNA gyrase by preventing its interaction with DNA. Acts by binding directly to the C-terminal domain of GyrB, which probably disrupts DNA binding by the gyrase. This Pseudomonas putida (strain ATCC 47054 / DSM 6125 / CFBP 8728 / NCIMB 11950 / KT2440) protein is DNA gyrase inhibitor YacG.